Here is a 154-residue protein sequence, read N- to C-terminus: Nascent polypeptide-associated complex subunit beta (154 aa).

The region spanning 34–99 is the NAC-A/B domain; it reads EQDDTKLIEA…PQEKDVTQLI (66 aa). The disordered stretch occupies residues 125 to 154; sequence KNPELNAGGAEGAEEDIPDLIEGQKFDDVE.

This sequence belongs to the NAC-beta family. Part of the nascent polypeptide-associated complex (NAC), consisting of EGD2 and EGD1. NAC associates with ribosomes via EGD1.

It is found in the cytoplasm. The protein localises to the nucleus. Functionally, component of the nascent polypeptide-associated complex (NAC), a dynamic component of the ribosomal exit tunnel, protecting the emerging polypeptides from interaction with other cytoplasmic proteins to ensure appropriate nascent protein targeting. The NAC complex also promotes mitochondrial protein import by enhancing productive ribosome interactions with the outer mitochondrial membrane and blocks the inappropriate interaction of ribosomes translating non-secretory nascent polypeptides with translocation sites in the membrane of the endoplasmic reticulum. EGD1 may act as a transcription factor that exert a negative effect on the expression of several genes that are transcribed by RNA polymerase II. The sequence is that of Nascent polypeptide-associated complex subunit beta (EGD1) from Debaryomyces hansenii (strain ATCC 36239 / CBS 767 / BCRC 21394 / JCM 1990 / NBRC 0083 / IGC 2968) (Yeast).